A 208-amino-acid chain; its full sequence is Large ribosomal subunit protein uL3 (208 aa).

Glutamine 149 bears the N5-methylglutamine mark.

The protein belongs to the universal ribosomal protein uL3 family. As to quaternary structure, part of the 50S ribosomal subunit. Forms a cluster with proteins L14 and L19. In terms of processing, methylated by PrmB.

One of the primary rRNA binding proteins, it binds directly near the 3'-end of the 23S rRNA, where it nucleates assembly of the 50S subunit. In Haemophilus influenzae (strain 86-028NP), this protein is Large ribosomal subunit protein uL3.